Consider the following 133-residue polypeptide: ATP synthase epsilon chain, chloroplastic (133 aa).

The protein belongs to the ATPase epsilon chain family. In terms of assembly, F-type ATPases have 2 components, CF(1) - the catalytic core - and CF(0) - the membrane proton channel. CF(1) has five subunits: alpha(3), beta(3), gamma(1), delta(1), epsilon(1). CF(0) has three main subunits: a, b and c.

The protein resides in the plastid. Its subcellular location is the chloroplast thylakoid membrane. Functionally, produces ATP from ADP in the presence of a proton gradient across the membrane. This Morus indica (Mulberry) protein is ATP synthase epsilon chain, chloroplastic.